The chain runs to 79 residues: uncharacterized protein (79 aa).

This is an uncharacterized protein from Homo sapiens (Human).